The sequence spans 428 residues: Flotillin-2 (428 aa).

The N-myristoyl glycine moiety is linked to residue G2. C4 carries the S-palmitoyl cysteine; by ZDHHC5 lipid modification. C19 carries the S-palmitoyl cysteine lipid modification. The S-palmitoyl cysteine; by ZDHHC5 moiety is linked to residue C20. S405 bears the Phosphoserine mark.

It belongs to the band 7/mec-2 family. Flotillin subfamily. As to quaternary structure, heterooligomeric complex of flotillin-1 and flotillin-2 and caveolin-1 and caveolin-2. Interacts with ECPAS. Post-translationally, ZDHHC5-catalyzed palmitoylation may be required for the formation of higher-order complexes and for neurite outgrowth in cultured neural stem cells.

The protein resides in the cell membrane. The protein localises to the membrane. Its subcellular location is the caveola. It localises to the endosome. In terms of biological role, may act as a scaffolding protein within caveolar membranes, functionally participating in formation of caveolae or caveolae-like vesicles. May be involved in epidermal cell adhesion and epidermal structure and function. The chain is Flotillin-2 (FLOT2) from Bos taurus (Bovine).